Reading from the N-terminus, the 609-residue chain is Arginine--tRNA ligase (609 aa).

The short motif at alanine 132–histidine 142 is the 'HIGH' region element.

This sequence belongs to the class-I aminoacyl-tRNA synthetase family. As to quaternary structure, monomer.

The protein resides in the cytoplasm. It catalyses the reaction tRNA(Arg) + L-arginine + ATP = L-arginyl-tRNA(Arg) + AMP + diphosphate. The sequence is that of Arginine--tRNA ligase from Psychrobacter arcticus (strain DSM 17307 / VKM B-2377 / 273-4).